The chain runs to 240 residues: MLARTDSTNAEALKLAPGLSGSAWVLAREQFAGRGRRGREWVMPAGNFAGTLVLRPQGGALAAAQLSFVAALALYDALGLACGPAARLAIKWPNDVLLNGGKVAGILLESSGSGPGVQAVAVGIGVNLAGAPDAGAVEPGATPPVSVQGETGHAVDPEEFLDLLAPAFARWQAQLDTYGFAPIRNAWLARAARLGEPIIARTGTAESHGIFEGIDDSGALILRGPAGRQVIPAAEVFFGG.

In terms of domain architecture, BPL/LPL catalytic spans 1 to 176; it reads MLARTDSTNA…AFARWQAQLD (176 aa). Biotin contacts are provided by residues 7–9, glutamine 30, 34–36, and lysine 102; these read STN and RGR.

It belongs to the biotin--protein ligase family.

The catalysed reaction is biotin + L-lysyl-[protein] + ATP = N(6)-biotinyl-L-lysyl-[protein] + AMP + diphosphate + H(+). Activates biotin to form biotinyl-5'-adenylate and transfers the biotin moiety to biotin-accepting proteins. The chain is Biotin--[acetyl-CoA-carboxylase] ligase (birA) from Paracoccus denitrificans.